The primary structure comprises 737 residues: UPF0507 protein YML002W (737 aa).

Residues 1–83 (MDSHQLELPD…FEDFNKNTGN (83 aa)) form the VPS9 domain.

This sequence belongs to the UPF0507 family.

The protein is UPF0507 protein YML002W of Saccharomyces cerevisiae (strain ATCC 204508 / S288c) (Baker's yeast).